Consider the following 334-residue polypeptide: Glyceraldehyde-3-phosphate dehydrogenase 1 (334 aa).

NAD(+) contacts are provided by residues 11-12, D33, R77, and S119; that span reads RI. D-glyceraldehyde 3-phosphate-binding positions include 150-152 and T181; that span reads SCT. Residue C151 is the Nucleophile of the active site. Position 182 (N182) interacts with NAD(+). D-glyceraldehyde 3-phosphate contacts are provided by residues R196, 209–210, and R232; that span reads TG. N314 contributes to the NAD(+) binding site.

This sequence belongs to the glyceraldehyde-3-phosphate dehydrogenase family. Homotetramer.

The protein resides in the cytoplasm. The enzyme catalyses D-glyceraldehyde 3-phosphate + phosphate + NAD(+) = (2R)-3-phospho-glyceroyl phosphate + NADH + H(+). It participates in carbohydrate degradation; glycolysis; pyruvate from D-glyceraldehyde 3-phosphate: step 1/5. Its function is as follows. Catalyzes the oxidative phosphorylation of glyceraldehyde 3-phosphate (G3P) to 1,3-bisphosphoglycerate (BPG) using the cofactor NAD. The first reaction step involves the formation of a hemiacetal intermediate between G3P and a cysteine residue, and this hemiacetal intermediate is then oxidized to a thioester, with concomitant reduction of NAD to NADH. The reduced NADH is then exchanged with the second NAD, and the thioester is attacked by a nucleophilic inorganic phosphate to produce BPG. The polypeptide is Glyceraldehyde-3-phosphate dehydrogenase 1 (gap1) (Bacillus cereus).